The sequence spans 63 residues: Beta-defensin 3 (63 aa).

A signal peptide spans 1 to 20 (MRIHYLLFAFLLVLLSPPAA). A propeptide spanning residues 21–22 (FS) is cleaved from the precursor. 3 cysteine pairs are disulfide-bonded: cysteine 31/cysteine 59, cysteine 38/cysteine 52, and cysteine 42/cysteine 60.

This sequence belongs to the beta-defensin family. LAP/TAP subfamily. Highest expression in salivary glands, epididymis, ovary and pancreas and to a lesser extent in lung, liver and brain. Low or no expression in skeletal muscle and tongue.

It localises to the secreted. Functionally, antimicrobial activity against Gram-negative bacteria E.coli and P.aeruginosa. The protein is Beta-defensin 3 (Defb3) of Mus musculus (Mouse).